An 89-amino-acid chain; its full sequence is Small ribosomal subunit protein uS15 (89 aa).

A compositionally biased stretch (polar residues) spans 1–10 (MAVTTDQKSQ). The segment at 1–22 (MAVTTDQKSQVMRDYQRAAGDT) is disordered.

This sequence belongs to the universal ribosomal protein uS15 family. Part of the 30S ribosomal subunit. Forms a bridge to the 50S subunit in the 70S ribosome, contacting the 23S rRNA.

In terms of biological role, one of the primary rRNA binding proteins, it binds directly to 16S rRNA where it helps nucleate assembly of the platform of the 30S subunit by binding and bridging several RNA helices of the 16S rRNA. Functionally, forms an intersubunit bridge (bridge B4) with the 23S rRNA of the 50S subunit in the ribosome. This Nitrosomonas europaea (strain ATCC 19718 / CIP 103999 / KCTC 2705 / NBRC 14298) protein is Small ribosomal subunit protein uS15.